Consider the following 629-residue polypeptide: tRNA uridine 5-carboxymethylaminomethyl modification enzyme MnmG (629 aa).

Residues 13–18 (GGGHAG), valine 125, and serine 180 contribute to the FAD site. 273 to 287 (GPRYCPSIEDKVMRF) is an NAD(+) binding site. FAD is bound at residue glutamine 370.

This sequence belongs to the MnmG family. Homodimer. Heterotetramer of two MnmE and two MnmG subunits. FAD is required as a cofactor.

It localises to the cytoplasm. Its function is as follows. NAD-binding protein involved in the addition of a carboxymethylaminomethyl (cmnm) group at the wobble position (U34) of certain tRNAs, forming tRNA-cmnm(5)s(2)U34. The protein is tRNA uridine 5-carboxymethylaminomethyl modification enzyme MnmG of Salmonella paratyphi C (strain RKS4594).